A 206-amino-acid polypeptide reads, in one-letter code: Imidazole glycerol phosphate synthase subunit hisH (206 aa).

Residues 2–206 (KVGLVDYSMG…REVMKKAASL (205 aa)) form the Glutamine amidotransferase type-1 domain. C80 serves as the catalytic Nucleophile. Active-site residues include H184 and E186.

In terms of assembly, heterodimer of hisH and hisF.

Its subcellular location is the plastid. It localises to the chloroplast. It carries out the reaction 5-[(5-phospho-1-deoxy-D-ribulos-1-ylimino)methylamino]-1-(5-phospho-beta-D-ribosyl)imidazole-4-carboxamide + L-glutamine = D-erythro-1-(imidazol-4-yl)glycerol 3-phosphate + 5-amino-1-(5-phospho-beta-D-ribosyl)imidazole-4-carboxamide + L-glutamate + H(+). The enzyme catalyses L-glutamine + H2O = L-glutamate + NH4(+). The protein operates within amino-acid biosynthesis; L-histidine biosynthesis; L-histidine from 5-phospho-alpha-D-ribose 1-diphosphate: step 5/9. Its function is as follows. IGPS catalyzes the conversion of PRFAR and glutamine to IGP, AICAR and glutamate. The HisH subunit catalyzes the hydrolysis of glutamine to glutamate and ammonia as part of the synthesis of IGP and AICAR. The resulting ammonia molecule is channeled to the active site of HisF. This is Imidazole glycerol phosphate synthase subunit hisH from Cyanidioschyzon merolae (strain NIES-3377 / 10D) (Unicellular red alga).